The following is an 867-amino-acid chain: GATOR2 complex protein Mio (867 aa).

WD repeat units follow at residues 51-86, 100-144, 149-188, 190-228, and 231-272; these read ANES…GICN, RQQR…PKET, GVGE…ATCQ, IQTK…SPLR, and QSSK…TDNS. A compositionally biased stretch (low complexity) spans 350 to 376; sequence PASPTSTAATPTQQQPTSSCSTNSGSS. Residues 350–378 form a disordered region; it reads PASPTSTAATPTQQQPTSSCSTNSGSSLD. The segment at 739 to 777 adopts a C4-type zinc-finger fold; sequence LSCNFCGKSVSNALLDEPRPRSTTTSTNRLSSCPSCRKP. Zn(2+) contacts are provided by Cys-741, Cys-744, Cys-771, Cys-774, Cys-784, Cys-821, Cys-824, His-826, His-829, His-832, Cys-843, Cys-848, and Cys-852. Residues 778–857 form an RING-type; atypical zinc finger; sequence LPRCSLCLMH…CNCRCFDMDG (80 aa).

Belongs to the WD repeat mio family. Component of the GATOR complex consisting of mio, Nup44A/Seh1, Im11, Nplr3, Nplr2, Wdr24, Wdr59 and Sec13. Within the GATOR complex, probable component of the GATOR2 subcomplex which is likely composed of mio, Nup44A/Seh1, Wdr24, Wdr59 and Sec13. Interacts with Wdr24. Interacts with nucleoporin Nup44A/Seh1. The GATOR2 complex associates with unmet in the absence of S-adenosyl-L-methionine; the mio-Wdr24-Nup44A subcomplex is essential and sufficient for this interaction while Wdr59 and Sec13 are dispensable. This association acts as a nutrient sensor to inhibit mTORC1 signaling in the absence of methionine. As to expression, present in the oocyte.

It is found in the nucleus. Its subcellular location is the lysosome. Functionally, an essential component of the GATOR subcomplex GATOR2 which functions as an activator of the amino acid-sensing branch of the mTORC1 signaling pathway. The two GATOR subcomplexes, GATOR1 and GATOR2, regulate the mTORC1 pathway in order to mediate metabolic homeostasis, female gametogenesis and the response to amino acid limitation and complete starvation. GATOR2 activates the mTORC1 signaling pathway through the inhibition of the GATOR1 subcomplex, controlling the switch to cell proliferation and growth under nutrient replete conditions and during female oocyte development. This component is required for activating mTORC1 specifically in germline cells to promote cell growth and maintain the oocyte fate. GATOR1 and GATOR2 act at different stages of oogenesis to regulate mTORC1 in order to control meiotic entry and promote oocyte growth and development. After exactly four mitotic cyst divisions, the GATOR1 complex members (Iml1, Nprl2 and Nprl3) down-regulate mTORC1 to slow cellular metabolism and promote the mitotic/meiotic transition. At later stages of oogenesis, the mio and Nup44A components of the GATOR2 complex inhibit GATOR1 and thus activate mTORC1 to promote meiotic progression, and drive oocyte growth and development. In addition to its role in the regulation of the mTORC1 complex, functions independently of mTORC1 to prevent the inappropriate accumulation of autolysosomes in germline tissues. The sequence is that of GATOR2 complex protein Mio from Drosophila melanogaster (Fruit fly).